An 87-amino-acid chain; its full sequence is Neurotoxin Cex1 (87 aa).

The signal sequence occupies residues 1-19; it reads MNSLLMITTCLVLFGTVWA. The region spanning 20-85 is the LCN-type CS-alpha/beta domain; that stretch reads KEGYLVSKST…TYPIPGKSCG (66 aa). Disulfide bonds link Cys31–Cys84, Cys35–Cys60, Cys44–Cys65, and Cys48–Cys67. Cysteine amide is present on Cys84. A propeptide spanning residues 85-87 is cleaved from the precursor; that stretch reads GKK.

Belongs to the long (4 C-C) scorpion toxin superfamily. Sodium channel inhibitor family. Beta subfamily. As to expression, expressed by the venom gland.

It localises to the secreted. In terms of biological role, beta toxins bind voltage-independently at site-4 of sodium channels (Nav) and shift the voltage of activation toward more negative potentials thereby affecting sodium channel activation and promoting spontaneous and repetitive firing. This chain is Neurotoxin Cex1, found in Centruroides exilicauda (Bark scorpion).